The chain runs to 366 residues: MNKVILYCRPGFEKECAAEITDKAARYNVYGFVRVKDNSGYVVFECYQHEDADRLIKELPFQELVFARQMMVCGELLRDLPPEDRITPIVGMLTGVLERAGELRVEVPDTNESKELMKFCRKFTVPLRAALRENRILLAQEKASRPVIHVLFIAPGCCYVGYSYSNNNSPFYMGIPRLKFPADAPSRSTLKLEEAFHVFVPADEWDERLGSGMFAVDLGACPGGWTYQLVKRSMMVHAVDNGMMAPSLMDTGQVIHHQADGFRFEPPRNNIYWLVCDMVEKPAKVTNRMADWLVNGWCREVIFNLKLPMKKRYEEVTQNLALLAQRLEENGINFEIHAKHLYHDREEITVHARRIWGAIPGRRDER.

S-adenosyl-L-methionine is bound by residues serine 188, 221–224, aspartate 240, aspartate 260, and aspartate 277; that span reads CPGG. The active-site Proton acceptor is the lysine 306.

It belongs to the class I-like SAM-binding methyltransferase superfamily. RNA methyltransferase RlmE family. RlmM subfamily. Monomer.

It is found in the cytoplasm. The enzyme catalyses cytidine(2498) in 23S rRNA + S-adenosyl-L-methionine = 2'-O-methylcytidine(2498) in 23S rRNA + S-adenosyl-L-homocysteine + H(+). Its function is as follows. Catalyzes the 2'-O-methylation at nucleotide C2498 in 23S rRNA. The polypeptide is Ribosomal RNA large subunit methyltransferase M (Dickeya chrysanthemi (strain Ech1591) (Dickeya zeae (strain Ech1591))).